The following is a 269-amino-acid chain: Imidazoleglycerol-phosphate dehydratase 3, chloroplastic (269 aa).

The transit peptide at 1–51 directs the protein to the chloroplast; that stretch reads MTTAPVVSPSLSRLHSAPASPFPKAPVGSGAGVAFPARPYGPSLRLRSAVM. Residues Glu83, 109–117, 135–139, Arg161, and Arg183 contribute to the substrate site; these read HMLDQLASH and HHSNE. Mn(2+) contacts are provided by His109, His135, His136, and Glu139. Residues His207, His231, His232, and Glu235 each coordinate Mn(2+). Residues 231 to 239 and 261 to 263 contribute to the substrate site; these read HHIIEATFK and SSK.

It belongs to the imidazoleglycerol-phosphate dehydratase family. Requires Mn(2+) as cofactor.

The protein resides in the plastid. The protein localises to the chloroplast. The catalysed reaction is D-erythro-1-(imidazol-4-yl)glycerol 3-phosphate = 3-(imidazol-4-yl)-2-oxopropyl phosphate + H2O. It functions in the pathway amino-acid biosynthesis; L-histidine biosynthesis; L-histidine from 5-phospho-alpha-D-ribose 1-diphosphate: step 6/9. The chain is Imidazoleglycerol-phosphate dehydratase 3, chloroplastic from Triticum aestivum (Wheat).